Consider the following 104-residue polypeptide: Large ribosomal subunit protein bL21c (104 aa).

This sequence belongs to the bacterial ribosomal protein bL21 family. As to quaternary structure, part of the 50S ribosomal subunit.

The protein resides in the plastid. It localises to the chloroplast. Functionally, this protein binds to 23S rRNA. This chain is Large ribosomal subunit protein bL21c, found in Pyropia yezoensis (Susabi-nori).